A 611-amino-acid polypeptide reads, in one-letter code: UvrABC system protein C (611 aa).

The 79-residue stretch at 6 to 84 (NNPGVYRMFN…IKRSRPRFNV (79 aa)) folds into the GIY-YIG domain. One can recognise a UVR domain in the interval 194–229 (QSVKDHLAAAMQAASADLDFEHAAVYRDRLAALSHV).

It belongs to the UvrC family. In terms of assembly, interacts with UvrB in an incision complex.

Its subcellular location is the cytoplasm. In terms of biological role, the UvrABC repair system catalyzes the recognition and processing of DNA lesions. UvrC both incises the 5' and 3' sides of the lesion. The N-terminal half is responsible for the 3' incision and the C-terminal half is responsible for the 5' incision. In Brucella suis biovar 1 (strain 1330), this protein is UvrABC system protein C.